A 194-amino-acid polypeptide reads, in one-letter code: Holliday junction branch migration complex subunit RuvA (194 aa).

The tract at residues 1 to 64 (MISRLTGKLV…EDAHLLFGFA (64 aa)) is domain I. Residues 65–143 (TAEERKTFRQ…AHTVTDGLFA (79 aa)) are domain II. A flexible linker region spans residues 144–147 (AAPA). The domain III stretch occupies residues 147–194 (AADETEDIVSTLLALGYSEREAKAAVKGVPEGTDVGEGVRLALKNLLK).

It belongs to the RuvA family. Homotetramer. Forms an RuvA(8)-RuvB(12)-Holliday junction (HJ) complex. HJ DNA is sandwiched between 2 RuvA tetramers; dsDNA enters through RuvA and exits via RuvB. An RuvB hexamer assembles on each DNA strand where it exits the tetramer. Each RuvB hexamer is contacted by two RuvA subunits (via domain III) on 2 adjacent RuvB subunits; this complex drives branch migration. In the full resolvosome a probable DNA-RuvA(4)-RuvB(12)-RuvC(2) complex forms which resolves the HJ.

The protein resides in the cytoplasm. In terms of biological role, the RuvA-RuvB-RuvC complex processes Holliday junction (HJ) DNA during genetic recombination and DNA repair, while the RuvA-RuvB complex plays an important role in the rescue of blocked DNA replication forks via replication fork reversal (RFR). RuvA specifically binds to HJ cruciform DNA, conferring on it an open structure. The RuvB hexamer acts as an ATP-dependent pump, pulling dsDNA into and through the RuvAB complex. HJ branch migration allows RuvC to scan DNA until it finds its consensus sequence, where it cleaves and resolves the cruciform DNA. The chain is Holliday junction branch migration complex subunit RuvA from Neisseria meningitidis serogroup C (strain 053442).